A 550-amino-acid chain; its full sequence is MSSDITGTAAWQKLRDHHAQIQSVHLRELFEKDPARGQELTVTAGDLYIDYSKHRIDRDTLGLLLELARSADLEARRDAMFAGEHINTSEDRAVLHTALRLPADASLVVDGQDVVADVHEVLDRMGDFTDRVRSGEWRGATGERIKTVVNIGIGGSDLGPVMVYRALRHYADAGISVRFISNVDPADLVRSLQGLDPATTLFIVASKTFSTLETLTNATAARRWLLGGLGLGNEAVAKHFVAVSTHADRVAEFGIDTANMFGFWDWVGGRYSVDSAIGLSVMAAIGKERFAEFLAGFHAVDEHFRTAPLEENAPVLLGLIGLWYSNFFGAESRAVLPYSNDLVRFAAYLQQLTMESNGKSVRADGTPVPTSTGEIFWGEPGTNGQHAFYQLLHQGTRLVPSDFIGFGEPTDDLPTADGTGSMHDLLMSNFFAQTKVLAFGKTAEEIAAEGTPEHLVPHKVMPGNRPSTTILAPKLTPSVIGQLIALYEHQVFVEGVVWGIDSFDQWGVELGKTQAVELQPVLTAAEEPAAQSDSSTDSLVRWYRRQRGRA.

The Proton donor role is filled by Glu-355. Catalysis depends on residues His-386 and Lys-512.

It belongs to the GPI family.

The protein localises to the cytoplasm. It catalyses the reaction alpha-D-glucose 6-phosphate = beta-D-fructose 6-phosphate. The protein operates within carbohydrate biosynthesis; gluconeogenesis. Its pathway is carbohydrate degradation; glycolysis; D-glyceraldehyde 3-phosphate and glycerone phosphate from D-glucose: step 2/4. Functionally, catalyzes the reversible isomerization of glucose-6-phosphate to fructose-6-phosphate. In Rhodococcus jostii (strain RHA1), this protein is Glucose-6-phosphate isomerase 1.